A 452-amino-acid chain; its full sequence is Gastrin/cholecystokinin type B receptor (452 aa).

Residues 1-57 (MELLKLNRSLPGPGPGAALCRPEGPLLNGSGAGNLSCEPPRIRGAGTRELELAVRIT) lie on the Extracellular side of the membrane. N-linked (GlcNAc...) asparagine glycosylation is found at N7, N28, and N34. The chain crosses the membrane as a helical span at residues 58–78 (LYAAIFLMSVAGNVLIIVVLG). At 79-99 (LSRRLRTVTNAFLLSLAVSDL) the chain is on the cytoplasmic side. Residues 100–120 (LLAVACMPFTLLPNLMGTFIF) form a helical membrane-spanning segment. Over 121–127 (GTVVCKA) the chain is Extracellular. The cysteines at positions 125 and 203 are disulfide-linked. Residues 128–148 (VSYFMGVSVSVSTLSLVAIAL) form a helical membrane-spanning segment. Over 149-171 (ERYSAICRPLQARVWQTRSHAAR) the chain is Cytoplasmic. Residues 172-192 (VIVATWMLSGLLMVPYPVYTA) form a helical membrane-spanning segment. The Extracellular segment spans residues 193-218 (VQPAGPRVLQCMHRWPSARIRQTWSV). The helical transmembrane segment at 219–239 (LLLLLLFFVPGVVMAVAYGLI) threads the bilayer. At 240-339 (SRELYLGLRF…LLAKKRVVRM (100 aa)) the chain is on the cytoplasmic side. Residues 256-285 (ESQSQVGSQGGLPGGAGQGPAHPNGHCRSE) are disordered. Over residues 263–273 (SQGGLPGGAGQ) the composition is skewed to gly residues. The helical transmembrane segment at 340 to 360 (LLVIVVLFFLCWLPVYSANTW) threads the bilayer. The Extracellular portion of the chain corresponds to 361–376 (RAFDGPGAHRALSGAP). A helical membrane pass occupies residues 377 to 397 (ISFIHLLSYASACVNPLVYCF). The Cytoplasmic portion of the chain corresponds to 398-452 (MHRRFRQACLDTCARCCPRPPRARPRPLPDEDPPTPSIASLSRLSYTTISTLGPG). C413 carries S-palmitoyl cysteine lipidation.

It belongs to the G-protein coupled receptor 1 family.

It localises to the cell membrane. Receptor for gastrin and cholecystokinin. The CCK-B receptors occur throughout the central nervous system where they modulate anxiety, analgesia, arousal, and neuroleptic activity. This receptor mediates its action by association with G proteins that activate a phosphatidylinositol-calcium second messenger system. This is Gastrin/cholecystokinin type B receptor from Sus scrofa (Pig).